We begin with the raw amino-acid sequence, 102 residues long: Carboxysome shell protein CcmK3 (102 aa).

The 87-residue stretch at 4–90 folds into the BMC domain; it reads AVGTIQTLGF…PQENVETVMP (87 aa).

The protein belongs to the bacterial microcompartments protein family. CcmK subfamily. As to quaternary structure, interacts stably with CcmK4, probably forms heterohexamers with a 1:2 CcmK3:CcmK4 stoichiometry. Bulky residues in the pore region probably preclude the formation of homohexamers by this subunit.

It is found in the carboxysome. Functionally, a non-essential, minor shell protein of the carboxysome, a polyhedral inclusion where RuBisCO (ribulose bisphosphate carboxylase, rbcL-rbcS) is sequestered. Hexamers form sheets that form the facets of the polyhedral carboxysome. In PCC 7942 there are several CcmK paralogs with presumably functional differences. This subunit probably only makes heterohexamers with CcmK4. The CcmK3-CcmK4 heterohexmers have been suggested to cap other hexamers, perhaps to alter metabolite flux. This chain is Carboxysome shell protein CcmK3, found in Synechococcus elongatus (strain ATCC 33912 / PCC 7942 / FACHB-805) (Anacystis nidulans R2).